The sequence spans 1075 residues: Ataxin-2-like protein (1075 aa).

Met-1 carries the post-translational modification N-acetylmethionine. Residues 1 to 12 are compositionally biased toward low complexity; sequence MLKPQPLQQPSQ. The disordered stretch occupies residues 1–115; that stretch reads MLKPQPLQQP…KGPPQSPVFE (115 aa). Residues 98-121 form an interaction with MPL region; that stretch reads SARGQSTGKGPPQSPVFEGVYNNS. A phosphoserine mark is found at Ser-103 and Ser-111. Position 118 is a phosphotyrosine (Tyr-118). The region spanning 122-199 is the Sm domain; sequence RMLHFLTAVV…VMLVHFRNVD (78 aa). The residue at position 207 (Lys-207) is an N6-acetyllysine. Position 238 is a phosphoserine (Ser-238). At Tyr-264 the chain carries Phosphotyrosine. Ser-306 bears the Phosphoserine mark. Tyr-309 is modified (phosphotyrosine). Basic and acidic residues predominate over residues 316–328; that stretch reads ENDDGRTEEEKHS. Disordered regions lie at residues 316–521, 551–697, 733–770, 820–849, 865–940, and 1022–1045; these read ENDD…LEPQ, QFKL…SIPV, VSNS…MMQA, SNPR…EQPT, ATQL…SSFP, and PYIG…ADDR. The segment covering 330–342 has biased composition (polar residues); that stretch reads VQRQGSGRESPSL. 2 positions are modified to phosphoserine: Ser-335 and Ser-339. Lys-348 participates in a covalent cross-link: Glycyl lysine isopeptide (Lys-Gly) (interchain with G-Cter in SUMO2). Tyr-349 is subject to Phosphotyrosine. Arg-361 carries the asymmetric dimethylarginine modification. Low complexity predominate over residues 363 to 380; that stretch reads GVRCSSSRGGRPGLSSLP. Phosphoserine occurs at positions 391 and 409. Residues 421–433 show a composition bias toward polar residues; sequence TLSSPSNRPSGET. Ser-449 is modified (phosphoserine). 2 stretches are compositionally biased toward low complexity: residues 450-462 and 471-485; these read PKSA…SASC and VPTS…SSVS. Phosphoserine is present on residues Ser-493 and Ser-496. Residues 505–516 show a composition bias toward basic and acidic residues; the sequence is DVKELSTKEPGR. 4 positions are modified to phosphoserine: Ser-557, Ser-558, Ser-559, and Ser-563. Residues 571–584 are compositionally biased toward basic and acidic residues; that stretch reads ILKEEPKGKEKEVD. Ser-594 is subject to Phosphoserine. Position 632 is a phosphothreonine (Thr-632). Ser-634, Ser-674, Ser-680, and Ser-684 each carry phosphoserine. Composition is skewed to low complexity over residues 678–694 and 761–770; these read STST…STPS and PASAPPMMQA. Residues 874-898 are compositionally biased toward polar residues; the sequence is QPATTPTGSQPQSQHAAPSPVQHQA. 2 stretches are compositionally biased toward low complexity: residues 931–940 and 1025–1037; these read SAQSPQSSFP and GHPQ…QAPG.

The protein belongs to the ataxin-2 family. Interacts with MPL/TPOR and EPOR and dissociates after ligand stimulation. Interacts with DDX6, G3BP1, and ATXN2. Interacts with PRMT1. Interacts with CIC and ATXN1. Thrombopoietin triggers the phosphorylation on tyrosine residues in a way that is dependent on MPL C-terminal domain. Post-translationally, asymmetrically dimethylated. Probably methylated by PRMT1. Expressed at high levels in thymus, lymph node, spleen, fetal kidney and adult testis. Constitutively associated with MPL and EPOR in hematopoietic cells.

It localises to the membrane. Its subcellular location is the cytoplasm. The protein localises to the nucleus speckle. The protein resides in the cytoplasmic granule. Functionally, involved in the regulation of stress granule and P-body formation. The chain is Ataxin-2-like protein (ATXN2L) from Homo sapiens (Human).